A 547-amino-acid polypeptide reads, in one-letter code: T-complex protein 1 subunit alpha (547 aa).

The protein belongs to the TCP-1 chaperonin family. In terms of assembly, heterooligomeric complex of about 850 to 900 kDa that forms two stacked rings, 12 to 16 nm in diameter.

It is found in the cytoplasm. In terms of biological role, molecular chaperone; assists the folding of proteins upon ATP hydrolysis. Known to play a role, in vitro, in the folding of actin and tubulin. The polypeptide is T-complex protein 1 subunit alpha (Tetrahymena pyriformis).